Consider the following 277-residue polypeptide: Phosphatidylglycerol--prolipoprotein diacylglyceryl transferase (277 aa).

4 helical membrane passes run 18–38, 54–74, 91–111, and 115–135; these read IAIY…YFMA, DLLV…YVIF, EGGI…IVFA, and GLSF…GQAI. R137 serves as a coordination point for a 1,2-diacyl-sn-glycero-3-phospho-(1'-sn-glycerol). The next 3 membrane-spanning stretches (helical) occupy residues 177–197, 205–225, and 236–256; these read QPTF…LLLL, GELF…IEGM, and LRTA…LWVY.

This sequence belongs to the Lgt family.

It localises to the cell membrane. It carries out the reaction L-cysteinyl-[prolipoprotein] + a 1,2-diacyl-sn-glycero-3-phospho-(1'-sn-glycerol) = an S-1,2-diacyl-sn-glyceryl-L-cysteinyl-[prolipoprotein] + sn-glycerol 1-phosphate + H(+). It functions in the pathway protein modification; lipoprotein biosynthesis (diacylglyceryl transfer). Functionally, catalyzes the transfer of the diacylglyceryl group from phosphatidylglycerol to the sulfhydryl group of the N-terminal cysteine of a prolipoprotein, the first step in the formation of mature lipoproteins. In Shouchella clausii (strain KSM-K16) (Alkalihalobacillus clausii), this protein is Phosphatidylglycerol--prolipoprotein diacylglyceryl transferase.